The chain runs to 387 residues: Protein PHYTOCHROME KINASE SUBSTRATE 3 (387 aa).

Disordered stretches follow at residues 1–21, 74–128, and 242–271; these read MDAE…PQLL, HEKE…CNSQ, and LSTK…ASVA. A compositionally biased stretch (polar residues) spans 12–21; it reads QISSYKPQLL. The span at 74 to 83 shows a compositional bias: basic and acidic residues; the sequence is HEKENTHDHP. Residues 114-128 are compositionally biased toward polar residues; the sequence is HGTPSVRSESSCNSQ. Residues 242–261 show a composition bias toward low complexity; it reads LSTKNNNHNNNGNNSSMSSN.

This sequence belongs to the PKS family.

Its function is as follows. Probably involved in the phytochrome signaling pathway. The protein is Protein PHYTOCHROME KINASE SUBSTRATE 3 (PKS3) of Arabidopsis thaliana (Mouse-ear cress).